A 138-amino-acid polypeptide reads, in one-letter code: Acidic phospholipase A2 1 (138 aa).

The first 16 residues, 1–16 (MRTLWIMAVLLVGVDG), serve as a signal peptide directing secretion. 7 disulfides stabilise this stretch: Cys-42/Cys-131, Cys-44/Cys-60, Cys-59/Cys-110, Cys-65/Cys-138, Cys-66/Cys-103, Cys-73/Cys-97, and Cys-91/Cys-101. Ca(2+) is bound by residues Tyr-43, Gly-45, and Gly-47. Residue His-63 is part of the active site. Ca(2+) is bound at residue Asp-64. The active site involves Asp-104.

The protein belongs to the phospholipase A2 family. Group II subfamily. D49 sub-subfamily. As to quaternary structure, homodimer. The cofactor is Ca(2+). As to expression, expressed by the venom gland.

It is found in the secreted. The enzyme catalyses a 1,2-diacyl-sn-glycero-3-phosphocholine + H2O = a 1-acyl-sn-glycero-3-phosphocholine + a fatty acid + H(+). Its function is as follows. Snake venom phospholipase A2 (PLA2) that is highly lipolytic and myolytic. PLA2 catalyzes the calcium-dependent hydrolysis of the 2-acyl groups in 3-sn-phosphoglycerides. This is Acidic phospholipase A2 1 from Protobothrops flavoviridis (Habu).